Here is a 217-residue protein sequence, read N- to C-terminus: PRA1 family protein B3 (217 aa).

The interval 1-24 is disordered; sequence MMANPPTLPISDHSGGGSQSQQPV. 5 helical membrane-spanning segments follow: residues 76 to 96, 98 to 118, 138 to 158, 162 to 182, and 193 to 213; these read LPYF…LSLL, HPFS…LYLF, LGVL…GSLL, LMIG…EDLF, and LLSF…STPA.

Belongs to the PRA1 family. In terms of assembly, interacts with PRA1B1, PRA1B2, PRA1B4, PRA1B5, PRA1B6 and PRA1E. As to expression, expressed in hypocotyls and shoot apex.

It localises to the endosome membrane. May be involved in both secretory and endocytic intracellular trafficking in the endosomal/prevacuolar compartments. This Arabidopsis thaliana (Mouse-ear cress) protein is PRA1 family protein B3 (PRA1B3).